Consider the following 874-residue polypeptide: Alanine--tRNA ligase (874 aa).

Zn(2+) is bound by residues His-564, His-568, Cys-665, and His-669.

Belongs to the class-II aminoacyl-tRNA synthetase family. It depends on Zn(2+) as a cofactor.

It is found in the cytoplasm. It carries out the reaction tRNA(Ala) + L-alanine + ATP = L-alanyl-tRNA(Ala) + AMP + diphosphate. In terms of biological role, catalyzes the attachment of alanine to tRNA(Ala) in a two-step reaction: alanine is first activated by ATP to form Ala-AMP and then transferred to the acceptor end of tRNA(Ala). Also edits incorrectly charged Ser-tRNA(Ala) and Gly-tRNA(Ala) via its editing domain. In Cupriavidus metallidurans (strain ATCC 43123 / DSM 2839 / NBRC 102507 / CH34) (Ralstonia metallidurans), this protein is Alanine--tRNA ligase.